Reading from the N-terminus, the 278-residue chain is Putative ABC transporter ATP-binding protein MJ1572 (278 aa).

An ABC transporter domain is found at 5 to 242 (YRLVDVSYKY…LDELNLDVPE (238 aa)). ATP is bound at residue 38–45 (GPNGAGKT).

This sequence belongs to the ABC transporter superfamily.

It is found in the cell membrane. Its function is as follows. Probably part of an ABC transporter complex. Responsible for energy coupling to the transport system. The protein is Putative ABC transporter ATP-binding protein MJ1572 of Methanocaldococcus jannaschii (strain ATCC 43067 / DSM 2661 / JAL-1 / JCM 10045 / NBRC 100440) (Methanococcus jannaschii).